The sequence spans 452 residues: Tripartite motif-containing protein 49D (452 aa).

An RING-type zinc finger spans residues 15–56; that stretch reads CPICLNYFIDPVTIDCGHSFCRPCFYLNWQDIPILTQCFECL. The B box-type zinc finger occupies 88–129; sequence SEEQMCGTHRETKKIFCEVDRSLLCLLCSSSLEHRYHRHCPA. Residues Cys93, His96, Cys115, and His121 each coordinate Zn(2+). Residues 269–452 form the B30.2/SPRY domain; sequence ELRAGPITGL…LRPIFCCVHL (184 aa).

Belongs to the TRIM/RBCC family.

This chain is Tripartite motif-containing protein 49D, found in Homo sapiens (Human).